Consider the following 357-residue polypeptide: MTQPVQTIDVLLAEHAELELALADPALHSNPAEARRVGRRFARLAPIVATHRKLTSARDDLETARELVASDESFAAEVAALEARVGELDAQLTDMLAPRDPHDADDIVLEVKSGEGGEESALFAADLARMYIRYAERHGWAVTVLDETTSDLGGYKDATLAIASKADTPDGVWSRMKFEGGVHRVQRVPVTESQGRVHTSAAGVLVYPEPEEVGQVQIDESDLRIDVFRSSGKGGQGVNTTDSAVRITHLPTGIVVTCQNERSQLQNKTRALQVLAARLQAMAEEQALADASADRASQIRTVDRSERIRTYNFPENRITDHRIGYKSHNLDQVLDGDLDALFDALSAADKQSRLRQS.

N5-methylglutamine is present on Gln236.

It belongs to the prokaryotic/mitochondrial release factor family. Post-translationally, methylated by PrmC. Methylation increases the termination efficiency of RF1.

It is found in the cytoplasm. Peptide chain release factor 1 directs the termination of translation in response to the peptide chain termination codons UAG and UAA. The polypeptide is Peptide chain release factor 1 (prfA) (Mycobacterium bovis (strain ATCC BAA-935 / AF2122/97)).